The following is a 794-amino-acid chain: Histone-lysine N-methyltransferase, H3 lysine-9 specific SUVH5 (794 aa).

2 disordered regions span residues 187 to 210 (VGRD…KRSI) and 254 to 276 (SPVK…KNSE). A compositionally biased stretch (polar residues) spans 194 to 203 (NMGSKFSKNG). Residues 258–276 (PSEKRNGDYGEGSMRKNSE) are compositionally biased toward basic and acidic residues. The region spanning 365–515 (GTVPGVEVGD…KLVFKFKLRR (151 aa)) is the YDG domain. The 60-residue stretch at 585–644 (KSCGCTNGCSKSKNCACIVKNGGKIPYYDGAIVEIKPLVYECGPHCKCPPSCNMRVSQHG) folds into the Pre-SET domain. One can recognise an SET domain in the interval 647-764 (IKLEIFKTES…PLQELSYDYN (118 aa)). The 17-residue stretch at 778–794 (KKKFCYCGSAECSGRLY) folds into the Post-SET domain.

Belongs to the class V-like SAM-binding methyltransferase superfamily. Histone-lysine methyltransferase family. Suvar3-9 subfamily. In terms of tissue distribution, expressed in leaves stems and flowers.

It is found in the nucleus. Its subcellular location is the chromosome. The protein resides in the centromere. It carries out the reaction N(6)-methyl-L-lysyl(9)-[histone H3] + S-adenosyl-L-methionine = N(6),N(6)-dimethyl-L-lysyl(9)-[histone H3] + S-adenosyl-L-homocysteine + H(+). The enzyme catalyses L-lysyl(9)-[histone H3] + S-adenosyl-L-methionine = N(6)-methyl-L-lysyl(9)-[histone H3] + S-adenosyl-L-homocysteine + H(+). Histone methyltransferase. Methylates 'Lys-9' of histone H3. H3 'Lys-9' methylation represents a specific tag for epigenetic transcriptional repression. The sequence is that of Histone-lysine N-methyltransferase, H3 lysine-9 specific SUVH5 (SUVH5) from Arabidopsis thaliana (Mouse-ear cress).